The primary structure comprises 819 residues: Probable cadmium/zinc-transporting ATPase HMA1, chloroplastic (819 aa).

The transit peptide at 1-17 (MEPATLTRSSSLTRFPY) directs the protein to the chloroplast. Residues 18–122 (RRGLSTLRLA…IGWVRLANYL (105 aa)) lie on the Stromal side of the membrane. Residues 66–79 (DHHHDHHHDDEQDH) show a composition bias toward basic and acidic residues. The disordered stretch occupies residues 66 to 87 (DHHHDHHHDDEQDHHNHHHHHH). A helical membrane pass occupies residues 123–144 (REHLHLCCSAAAMFLAAAVCPY). The Lumenal segment spans residues 145–153 (LAPEPYIKS). Residues 154–173 (LQNAFMIVGFPLVGVSASLD) form a helical membrane-spanning segment. Topologically, residues 174 to 180 (ALMDIAG) are stromal. A helical transmembrane segment spans residues 181-201 (GKVNIHVLMALAAFASVFMGN). Position 202 (A202) is a topological domain, lumenal. Residues 203–223 (LEGGLLLAMFNLAHIAEEFFT) form a helical membrane-spanning segment. Residues 224–361 (SRSMVDVKEL…KPKLQRWLDE (138 aa)) are Stromal-facing. The helical transmembrane segment at 362-384 (FGENYSKVVVVLSLAIAFLGPFL) threads the bilayer. Residues 385–398 (FKWPFLSTAACRGS) lie on the Lumenal side of the membrane. A helical transmembrane segment spans residues 399–416 (VYRALGLMVAASPCALAV). At 417–737 (APLAYATAIS…AKSRQTTSLV (321 aa)) the chain is on the stromal side. The active-site 4-aspartylphosphate intermediate is D453. The Mg(2+) site is built by E682 and D686. The helical transmembrane segment at 738–757 (KQNVALALTSIFLAALPSVL) threads the bilayer. Topologically, residues 758–762 (GFVPL) are lumenal. The helical transmembrane segment at 763 to 781 (WLTVLLHEGGTLLVCLNSV) threads the bilayer. Residues 782–819 (RGLNDPSWSWKQDIVHLINKLRSQEPTSSSSNSLSSAH) lie on the Stromal side of the membrane.

It belongs to the cation transport ATPase (P-type) (TC 3.A.3) family. Type IB subfamily.

The protein localises to the plastid. Its subcellular location is the chloroplast inner membrane. It catalyses the reaction Zn(2+)(in) + ATP + H2O = Zn(2+)(out) + ADP + phosphate + H(+). It carries out the reaction Cd(2+)(in) + ATP + H2O = Cd(2+)(out) + ADP + phosphate + H(+). Functionally, involved in cadmium/zinc transport. In Arabidopsis thaliana (Mouse-ear cress), this protein is Probable cadmium/zinc-transporting ATPase HMA1, chloroplastic (HMA1).